The chain runs to 288 residues: Phenazine biosynthesis-like domain-containing protein (288 aa).

Glu-46 is an active-site residue.

It belongs to the PhzF family. Interacts with UNRIP/MAWD.

In Pongo abelii (Sumatran orangutan), this protein is Phenazine biosynthesis-like domain-containing protein (PBLD).